A 141-amino-acid polypeptide reads, in one-letter code: Terrelysin (141 aa).

Belongs to the aegerolysin family.

It localises to the cytoplasm. Its function is as follows. Hemolysins are potential virulence factors. Has hemolytic activity against sheep erythrocytes in vitro. This Aspergillus terreus (strain NIH 2624 / FGSC A1156) protein is Terrelysin.